Reading from the N-terminus, the 307-residue chain is 4-hydroxythreonine-4-phosphate dehydrogenase (307 aa).

2 residues coordinate substrate: H121 and T122. A divalent metal cation-binding residues include H150, H189, and H246. Substrate contacts are provided by K254, N263, and R272.

This sequence belongs to the PdxA family. Homodimer. Requires Zn(2+) as cofactor. It depends on Mg(2+) as a cofactor. Co(2+) serves as cofactor.

The protein localises to the cytoplasm. The enzyme catalyses 4-(phosphooxy)-L-threonine + NAD(+) = 3-amino-2-oxopropyl phosphate + CO2 + NADH. It functions in the pathway cofactor biosynthesis; pyridoxine 5'-phosphate biosynthesis; pyridoxine 5'-phosphate from D-erythrose 4-phosphate: step 4/5. Catalyzes the NAD(P)-dependent oxidation of 4-(phosphooxy)-L-threonine (HTP) into 2-amino-3-oxo-4-(phosphooxy)butyric acid which spontaneously decarboxylates to form 3-amino-2-oxopropyl phosphate (AHAP). In Campylobacter fetus subsp. fetus (strain 82-40), this protein is 4-hydroxythreonine-4-phosphate dehydrogenase.